A 417-amino-acid polypeptide reads, in one-letter code: NADH-quinone oxidoreductase subunit D (417 aa).

Belongs to the complex I 49 kDa subunit family. In terms of assembly, NDH-1 is composed of 14 different subunits. Subunits NuoB, C, D, E, F, and G constitute the peripheral sector of the complex.

The protein resides in the cell inner membrane. The enzyme catalyses a quinone + NADH + 5 H(+)(in) = a quinol + NAD(+) + 4 H(+)(out). NDH-1 shuttles electrons from NADH, via FMN and iron-sulfur (Fe-S) centers, to quinones in the respiratory chain. The immediate electron acceptor for the enzyme in this species is believed to be ubiquinone. Couples the redox reaction to proton translocation (for every two electrons transferred, four hydrogen ions are translocated across the cytoplasmic membrane), and thus conserves the redox energy in a proton gradient. The chain is NADH-quinone oxidoreductase subunit D from Aromatoleum aromaticum (strain DSM 19018 / LMG 30748 / EbN1) (Azoarcus sp. (strain EbN1)).